The sequence spans 299 residues: Acetaldehyde dehydrogenase 1 (299 aa).

Cys130 acts as the Acyl-thioester intermediate in catalysis. NAD(+)-binding positions include 161-169 (SVGPGTRKN) and Asn272.

Belongs to the acetaldehyde dehydrogenase family.

The catalysed reaction is acetaldehyde + NAD(+) + CoA = acetyl-CoA + NADH + H(+). This is Acetaldehyde dehydrogenase 1 (mhpF) from Burkholderia cenocepacia (strain ATCC BAA-245 / DSM 16553 / LMG 16656 / NCTC 13227 / J2315 / CF5610) (Burkholderia cepacia (strain J2315)).